The chain runs to 483 residues: PAT complex subunit CCDC47 (483 aa).

The signal sequence occupies residues Met1 to Ala20. Topologically, residues Lys21–Ser135 are cytoplasmic. The segment at Met46–Asp118 is disordered. The segment covering Thr60–Gly104 has biased composition (acidic residues). Basic and acidic residues predominate over residues Tyr105 to Asp118. The chain crosses the membrane as a helical span at residues Tyr136 to Ile155. Residues Gly156–Met483 are Lumenal-facing. N-linked (GlcNAc...) asparagine glycosylation occurs at Asn178. The segment at Gln424 to Met483 is disordered. A compositionally biased stretch (basic and acidic residues) spans Gln430–Gln472. A coiled-coil region spans residues Glu451–Lys481. A compositionally biased stretch (basic residues) spans Met473 to Met483.

It belongs to the CCDC47 family. In terms of assembly, component of the PAT complex, composed of WDR83OS/Asterix and CCDC47. The PAT complex is part of the multi-pass translocon (MPT) complex, composed of three subcomplexes, the GEL complex (composed of RAB5IF/OPTI and TMCO1), the BOS complex (composed of NCLN/Nicalin, NOMO1 and TMEM147) and the PAT complex (composed of WDR83OS/Asterix and CCDC47). The MPT complex associates with the SEC61 complex. Interacts with VCP, HSPA5, DERL1, DERL2 and SELENOS.

The protein localises to the endoplasmic reticulum membrane. It localises to the rough endoplasmic reticulum membrane. Its function is as follows. Component of the multi-pass translocon (MPT) complex that mediates insertion of multi-pass membrane proteins into the lipid bilayer of membranes. The MPT complex takes over after the SEC61 complex: following membrane insertion of the first few transmembrane segments of proteins by the SEC61 complex, the MPT complex occludes the lateral gate of the SEC61 complex to promote insertion of subsequent transmembrane regions. Within the MPT complex, the PAT subcomplex sequesters any highly polar regions in the transmembrane domains away from the non-polar membrane environment until they can be buried in the interior of the fully assembled protein. Within the PAT subcomplex, CCDC47 occludes the lateral gate of the SEC61 complex. Involved in the regulation of calcium ion homeostasis in the ER. Required for proper protein degradation via the ERAD (ER-associated degradation) pathway. Has an essential role in the maintenance of ER organization during embryogenesis. The chain is PAT complex subunit CCDC47 (CCDC47) from Pongo abelii (Sumatran orangutan).